The following is a 287-amino-acid chain: Efem/EfeO family lipoprotein (287 aa).

The signal sequence occupies residues 1–17 (MKKLPTILLASSLLLAA). Cysteine 18 carries the N-palmitoyl cysteine lipid modification. Cysteine 18 carries the S-diacylglycerol cysteine lipid modification. A disordered region spans residues 20–50 (NNSHSDDNSNKDKQSQSSKGENKASLQKATK). A compositionally biased stretch (basic and acidic residues) spans 23-33 (HSDDNSNKDKQ).

Belongs to the EfeM/EfeO family.

It localises to the cell membrane. This chain is Efem/EfeO family lipoprotein, found in Staphylococcus haemolyticus (strain JCSC1435).